A 372-amino-acid chain; its full sequence is Peroxisomal biogenesis factor 3 (372 aa).

At 1–15 (MLRSMWNFLKRHKKK) the chain is on the cytoplasmic side. Positions 1 to 45 (MLRSMWNFLKRHKKKCIFLGTVLGGVYILGKYGQKKLREIQEREA) are targeting to peroxisomes. Residues 16-36 (CIFLGTVLGGVYILGKYGQKK) traverse the membrane as a helical segment. Residues 37 to 116 (LREIQEREAA…LKIISFTRSI (80 aa)) are Peroxisomal-facing. A helical transmembrane segment spans residues 117-140 (VAVYSTCMLVVLLRVQLNIIGGYI). The interval 120-136 (YSTCMLVVLLRVQLNII) is interaction with PEX19. The Cytoplasmic segment spans residues 141–372 (YLDNATVGKN…AFSTPQQLEK (232 aa)).

This sequence belongs to the peroxin-3 family. In terms of assembly, interacts with PEX19.

Its subcellular location is the peroxisome membrane. Involved in peroxisome biosynthesis and integrity. Assembles membrane vesicles before the matrix proteins are translocated. As a docking factor for PEX19, is necessary for the import of peroxisomal membrane proteins in the peroxisomes. This chain is Peroxisomal biogenesis factor 3 (Pex3), found in Rattus norvegicus (Rat).